Reading from the N-terminus, the 212-residue chain is Acyl-homoserine-lactone synthase (212 aa).

It belongs to the autoinducer synthase family.

It carries out the reaction a fatty acyl-[ACP] + S-adenosyl-L-methionine = an N-acyl-L-homoserine lactone + S-methyl-5'-thioadenosine + holo-[ACP] + H(+). Its function is as follows. Required for the synthesis of OHHL (N-(3-oxohexanoyl)-L-homoserine lactone), an autoinducer molecule which binds to ExpR and thus acts in virulence (soft rot disease) through the activation of genes for plant tissue macerating enzymes. In Dickeya dadantii (strain 3937) (Erwinia chrysanthemi (strain 3937)), this protein is Acyl-homoserine-lactone synthase (expI).